The following is a 435-amino-acid chain: Angio-associated migratory cell protein (435 aa).

The disordered stretch occupies residues 1-65; that stretch reads MESESESGAA…EEEEEGNEEG (65 aa). Residue Ser-20 is modified to Phosphoserine. Acidic residues predominate over residues 39-63; that stretch reads DPDDLAQEMEDVDFEEEEEEEEGNE. 8 WD repeats span residues 90 to 130, 133 to 172, 174 to 213, 215 to 255, 259 to 300, 316 to 355, 357 to 396, and 399 to 434; these read LHSA…LLFE, GHKD…EVWS, EAGD…KTFQ, PNCP…HVLK, GHQG…GVFR, SESN…LRHQ, QHQS…LLTD, and GHTA…QRPD.

It is found in the cell membrane. The protein resides in the cytoplasm. Plays a role in angiogenesis and cell migration. In smooth muscle cell migration, may act through the RhoA pathway. This chain is Angio-associated migratory cell protein (AAMP), found in Canis lupus familiaris (Dog).